The following is a 404-amino-acid chain: Deoxyguanosinetriphosphate triphosphohydrolase-like protein (404 aa).

The HD domain occupies 69–217; the sequence is RLTHSLEVAQ…AGIADDIAYD (149 aa).

It belongs to the dGTPase family. Type 2 subfamily.

The polypeptide is Deoxyguanosinetriphosphate triphosphohydrolase-like protein (Rhodopseudomonas palustris (strain BisB18)).